Consider the following 191-residue polypeptide: Phosphoheptose isomerase (191 aa).

Residues 37–191 (IAESFKQDGK…IIQLIEKEME (155 aa)) enclose the SIS domain. Position 52–54 (52–54 (NGG)) interacts with substrate. Zn(2+)-binding residues include His-61 and Glu-65. Substrate contacts are provided by residues Glu-65, 93-94 (ND), 119-121 (STS), Ser-124, and Gln-172. Zn(2+) contacts are provided by Gln-172 and His-180.

Belongs to the SIS family. GmhA subfamily. In terms of assembly, homotetramer. Zn(2+) is required as a cofactor.

It is found in the cytoplasm. The catalysed reaction is 2 D-sedoheptulose 7-phosphate = D-glycero-alpha-D-manno-heptose 7-phosphate + D-glycero-beta-D-manno-heptose 7-phosphate. The protein operates within carbohydrate biosynthesis; D-glycero-D-manno-heptose 7-phosphate biosynthesis; D-glycero-alpha-D-manno-heptose 7-phosphate and D-glycero-beta-D-manno-heptose 7-phosphate from sedoheptulose 7-phosphate: step 1/1. Its pathway is bacterial outer membrane biogenesis; LPS core biosynthesis. Its function is as follows. Catalyzes the isomerization of sedoheptulose 7-phosphate in D-glycero-D-manno-heptose 7-phosphate. The chain is Phosphoheptose isomerase from Vibrio vulnificus (strain CMCP6).